Consider the following 321-residue polypeptide: uncharacterized protein (321 aa).

This is an uncharacterized protein from Acanthamoeba polyphaga mimivirus (APMV).